The sequence spans 901 residues: Protein translocase subunit SecA (901 aa).

Residues Q87, 105–109, and D512 each bind ATP; that span reads GEGKT. The tract at residues 855-891 is disordered; that stretch reads QQLSHQDDETAAAAALAEQTGERKVGRNDPCPCGSGK. 4 residues coordinate Zn(2+): C885, C887, C896, and H897.

Belongs to the SecA family. Monomer and homodimer. Part of the essential Sec protein translocation apparatus which comprises SecA, SecYEG and auxiliary proteins SecDF-YajC and YidC. The cofactor is Zn(2+).

Its subcellular location is the cell inner membrane. It is found in the cytoplasm. It catalyses the reaction ATP + H2O + cellular proteinSide 1 = ADP + phosphate + cellular proteinSide 2.. In terms of biological role, part of the Sec protein translocase complex. Interacts with the SecYEG preprotein conducting channel. Has a central role in coupling the hydrolysis of ATP to the transfer of proteins into and across the cell membrane, serving both as a receptor for the preprotein-SecB complex and as an ATP-driven molecular motor driving the stepwise translocation of polypeptide chains across the membrane. The sequence is that of Protein translocase subunit SecA from Cronobacter sakazakii (strain ATCC BAA-894) (Enterobacter sakazakii).